The primary structure comprises 809 residues: BTB/POZ domain-containing protein At2g30600 (809 aa).

2 BTB domains span residues 211-273 (SDTV…QILE) and 351-420 (SDIK…NMED). The BACK domain occupies 466 to 537 (VVSSISSCKL…LMWCMKAEES (72 aa)).

Its pathway is protein modification; protein ubiquitination. Its function is as follows. May act as a substrate-specific adapter of an E3 ubiquitin-protein ligase complex (CUL3-RBX1-BTB) which mediates the ubiquitination and subsequent proteasomal degradation of target proteins. The polypeptide is BTB/POZ domain-containing protein At2g30600 (Arabidopsis thaliana (Mouse-ear cress)).